A 636-amino-acid polypeptide reads, in one-letter code: Ligand-gated ion channel 4 (636 aa).

A signal peptide spans 1–25 (MVICHSCTTFCILLVIDLVPCRIVG). The Extracellular portion of the chain corresponds to 26–326 (MENVENRVMF…IHMHRRPLFY (301 aa)). N-linked (GlcNAc...) asparagine glycosylation is found at asparagine 45, asparagine 141, asparagine 179, and asparagine 227. A disulfide bridge connects residues cysteine 240 and cysteine 254. An N-linked (GlcNAc...) asparagine glycan is attached at asparagine 284. 3 consecutive transmembrane segments (helical) span residues 327-347 (VFNH…GFLM), 357-377 (MIIT…ESIP), and 383-403 (VPLI…ATCV). The Cytoplasmic segment spans residues 404–602 (NVITLNMHRN…QLASVVDRLL (199 aa)). The helical transmembrane segment at 603–623 (LCLFCTATLFTIICLLIVPVV) threads the bilayer.

The protein belongs to the ligand-gated ion channel (TC 1.A.9) family.

The protein localises to the postsynaptic cell membrane. It is found in the cell membrane. In terms of biological role, acetylcholine receptor. The polypeptide is Ligand-gated ion channel 4 (Caenorhabditis briggsae).